Reading from the N-terminus, the 435-residue chain is Probable aminotransferase gliI (435 aa).

Lys266 carries the post-translational modification N6-(pyridoxal phosphate)lysine.

Belongs to the class-I pyridoxal-phosphate-dependent aminotransferase family. Pyridoxal 5'-phosphate serves as cofactor.

The protein operates within mycotoxin biosynthesis. In terms of biological role, probable aminotransferase; part of the gene cluster that mediates the biosynthesis of gliotoxin, a member of the epipolythiodioxopiperazine (ETP) class of toxins characterized by a disulfide bridged cyclic dipeptide. The first step in gliotoxin biosynthesis is the condensation of serine and phenylalanine to form the cyclo-L-phenylalanyl-L-serine diketopiperazine (DKP) by the NRPS gliP. GliP is also able to produce the DKP cyclo-L-tryptophanyl-L-serine, suggesting that the substrate specificity of the first adenylation (A) domain in gliP is sufficiently relaxed to accommodate both L-Phe and L-Trp. The cytochrome P450 monooxygenase gliC has been shown to catalyze the subsequent hydroxylation of the alpha-carbon of L-Phe in cyclo-L-phenylalanyl-L-serine whereas the second cytochrome P450 enzyme, gliF, is presumably involved in the modification of the DKP side chain. The glutathione S-transferase (GST) gliG then forms a bis-glutathionylated biosynthetic intermediate which is responsible for the sulfurization of gliotoxin. This bis-glutathionylated intermediate is subsequently processed by the gamma-glutamyl cyclotransferase gliK to remove both gamma-glutamyl moieties. Subsequent processing via gliI yields a biosynthetic intermediate, which is N-methylated via the N-methyltransferase gliN, before the gliotoxin oxidoreductase gliT-mediated disulfide bridge closure. GliN-mediated amide methylation confers stability to ETP, damping the spontaneous formation of tri- and tetrasulfides. Intracellular dithiol gliotoxin oxidized by gliT is subsequently effluxed by gliA. Gliotoxin contributes to pathogenesis during invasive aspergillosis. In macrophages and neutrophils, gliotoxin showed inhibition of various different cell functions including cytokine production, antigen presentation, phagocytosis, and production of reactive oxygen species. In Aspergillus fumigatus (strain ATCC MYA-4609 / CBS 101355 / FGSC A1100 / Af293) (Neosartorya fumigata), this protein is Probable aminotransferase gliI.